Here is a 172-residue protein sequence, read N- to C-terminus: Adenine phosphoribosyltransferase (172 aa).

Belongs to the purine/pyrimidine phosphoribosyltransferase family. In terms of assembly, homodimer.

The protein resides in the cytoplasm. The catalysed reaction is AMP + diphosphate = 5-phospho-alpha-D-ribose 1-diphosphate + adenine. It functions in the pathway purine metabolism; AMP biosynthesis via salvage pathway; AMP from adenine: step 1/1. Its function is as follows. Catalyzes a salvage reaction resulting in the formation of AMP, that is energically less costly than de novo synthesis. The protein is Adenine phosphoribosyltransferase of Latilactobacillus sakei subsp. sakei (strain 23K) (Lactobacillus sakei subsp. sakei).